We begin with the raw amino-acid sequence, 882 residues long: Valine--tRNA ligase (882 aa).

The 'HIGH' region signature appears at 45 to 55; sequence PNVTGKLHLGH. Residues 519 to 523 carry the 'KMSKS' region motif; the sequence is KMSKS. Position 522 (Lys522) interacts with ATP. Residues 808–882 adopt a coiled-coil conformation; sequence LADLLNVEEE…RIAEMHKLVK (75 aa).

The protein belongs to the class-I aminoacyl-tRNA synthetase family. ValS type 1 subfamily. Monomer.

Its subcellular location is the cytoplasm. It catalyses the reaction tRNA(Val) + L-valine + ATP = L-valyl-tRNA(Val) + AMP + diphosphate. Catalyzes the attachment of valine to tRNA(Val). As ValRS can inadvertently accommodate and process structurally similar amino acids such as threonine, to avoid such errors, it has a 'posttransfer' editing activity that hydrolyzes mischarged Thr-tRNA(Val) in a tRNA-dependent manner. This Streptococcus pyogenes serotype M18 (strain MGAS8232) protein is Valine--tRNA ligase.